A 366-amino-acid polypeptide reads, in one-letter code: sn-glycerol-3-phosphate import ATP-binding protein UgpC (366 aa).

In terms of domain architecture, ABC transporter spans Val4–Ile235. An ATP-binding site is contributed by Gly37–Ser44.

It belongs to the ABC transporter superfamily. sn-glycerol-3-phosphate importer (TC 3.A.1.1.3) family. In terms of assembly, the complex is composed of two ATP-binding proteins (UgpC), two transmembrane proteins (UgpA and UgpE) and a solute-binding protein (UgpB).

It is found in the cell inner membrane. The enzyme catalyses sn-glycerol 3-phosphate(out) + ATP + H2O = sn-glycerol 3-phosphate(in) + ADP + phosphate + H(+). Part of the ABC transporter complex UgpBAEC involved in sn-glycerol-3-phosphate (G3P) import. Responsible for energy coupling to the transport system. The protein is sn-glycerol-3-phosphate import ATP-binding protein UgpC of Rhodopseudomonas palustris (strain BisB18).